The sequence spans 259 residues: Ribosomal RNA small subunit methyltransferase J (259 aa).

Residues 107-108 (RD), 123-124 (ER), 159-160 (SS), and Asp-177 contribute to the S-adenosyl-L-methionine site.

Belongs to the methyltransferase superfamily. RsmJ family.

The protein resides in the cytoplasm. It carries out the reaction guanosine(1516) in 16S rRNA + S-adenosyl-L-methionine = N(2)-methylguanosine(1516) in 16S rRNA + S-adenosyl-L-homocysteine + H(+). Specifically methylates the guanosine in position 1516 of 16S rRNA. The chain is Ribosomal RNA small subunit methyltransferase J from Shewanella loihica (strain ATCC BAA-1088 / PV-4).